The chain runs to 3027 residues: DmX-like protein 1 (3027 aa).

3 WD repeats span residues 108–145 (FLES…KPTE), 166–206 (KTAS…RTAV), and 229–277 (AHPR…NDCL). 4 positions are modified to phosphoserine: serine 324, serine 422, serine 425, and serine 436. A compositionally biased stretch (polar residues) spans 420–433 (PSSEASVEDSNQAD). Residues 420–450 (PSSEASVEDSNQADVKSDEETDDGVDDLKIN) are disordered. A WD 4 repeat occupies 476-516 (DHQIEVLLSEWSKNADMLFSIHPMDGSLLVWHVDWLDEYQP). The interval 563-584 (KQKPSGLTRSTSMLISSGHNKS) is disordered. Serine 574 bears the Phosphoserine mark. 3 WD repeats span residues 580–621 (GHNK…ESAF), 628–665 (SHKS…RTPD), and 848–895 (GKDS…IPVS). A phosphoserine mark is found at serine 918 and serine 924. 3 WD repeats span residues 968 to 1010 (PSAG…GESA), 1134 to 1175 (SNTK…VQDQ), and 1211 to 1251 (GSPP…EPVI). Residues serine 1830, serine 1896, serine 1908, and serine 1970 each carry the phosphoserine modification. 2 disordered regions span residues 2367 to 2412 (PSKE…SSAP) and 2446 to 2468 (SRAE…DDDD). Residues 2451-2468 (DSEESLGSDDDDNDDDDD) show a composition bias toward acidic residues. WD repeat units follow at residues 2742–2783 (KAIN…TCFR), 2785–2824 (GGNS…CPVT), 2836–2878 (CHNK…ANSL), 2884–2923 (CHDS…QRQL), 2926–2965 (SHDS…LLHT), and 2978–3016 (NIGT…SPLN).

In terms of tissue distribution, expressed in bone, breast, eye, foreskin, heart, parathyroid, small intestine, testis, tonsils, placenta and uterus.

The sequence is that of DmX-like protein 1 (DMXL1) from Homo sapiens (Human).